A 507-amino-acid chain; its full sequence is MVTLRADEISNIIRERIEQYNIGVKIVNTGTVLQVGDGIARIHGLDEVMAGELVEFEEGTIGIALNLESNNVGVVLMGDGLMIQEGSSVKATGRIAQIPVSEAYLGRVINALAKPIDGRGEISASESRLIESPAPGIISRRSVYEPLQTGLIAIDSMIPIGRGQRELIIGDRQTGKTAVATDTILNQKGQNVICVYVAIGQKASSVAQVVTTFQERGAMEYTIVVAETADSPATLQYLAPYTGAALAEYFMHREQHTSIIYDDLSKQAQAYRQMSLLLRRPPGREAYPGDVFYLHSRLLERAAKSSSRLGEGSMTALPIVETQSGDVSAYIPTNVISITDGQIFLSADLFNAGIRPAINVGISVSRVGSAAQIKAMKQVAGKSKLELAQFAELEAFAQFASDLDKATQNQLARGQRLRELLKQSQSDPLAVEEQIATIYTGANGYLDPLEIGQVKKFLVQLRTYLKKNKSQFKEIISSTKTFTEEAEALLKGAVQEQIELFLLQEQT.

Residue 170-177 coordinates ATP; sequence GDRQTGKT.

It belongs to the ATPase alpha/beta chains family. F-type ATPases have 2 components, CF(1) - the catalytic core - and CF(0) - the membrane proton channel. CF(1) has five subunits: alpha(3), beta(3), gamma(1), delta(1), epsilon(1). CF(0) has four main subunits: a, b, b' and c.

It localises to the plastid. The protein localises to the chloroplast thylakoid membrane. The enzyme catalyses ATP + H2O + 4 H(+)(in) = ADP + phosphate + 5 H(+)(out). In terms of biological role, produces ATP from ADP in the presence of a proton gradient across the membrane. The alpha chain is a regulatory subunit. In Dioscorea elephantipes (Elephant's foot yam), this protein is ATP synthase subunit alpha, chloroplastic.